Reading from the N-terminus, the 277-residue chain is MVVKIGIIKCGNIGMSPVVDLALDERADRKDIAVRVLGSGAKMDPESVEEVTKKMVEEVKPDFIIYIGPNPAAPGPKKAREILSQSGIPAVIIGDAPGLRVKDEMEQQGLGYIIIKCDPMIGARREFLDPVEMALFNADVIRVLAGTGALRIVQEAIDKMIDAVKEGKEIELPKIVITEQKAVEAMEFTNPYAKAKAMAAFTIAEKVGDVDVKGCFMTKEAEKYIPIVASAHEMIRYAAKLVDEARELEKAMDAVSRKPHHPEGKRLSKKALMEKPE.

The segment at 252–277 (MDAVSRKPHHPEGKRLSKKALMEKPE) is disordered.

Belongs to the MTD family.

It catalyses the reaction 5,10-methylenetetrahydromethanopterin + oxidized coenzyme F420-(gamma-L-Glu)(n) + 2 H(+) = 5,10-methenyl-5,6,7,8-tetrahydromethanopterin + reduced coenzyme F420-(gamma-L-Glu)(n). Its pathway is one-carbon metabolism; methanogenesis from CO(2); 5,10-methylene-5,6,7,8-tetrahydromethanopterin from 5,10-methenyl-5,6,7,8-tetrahydromethanopterin (coenzyme F420 route): step 1/1. In terms of biological role, catalyzes the reversible reduction of methenyl-H(4)MPT(+) to methylene-H(4)MPT. This Methanocaldococcus jannaschii (strain ATCC 43067 / DSM 2661 / JAL-1 / JCM 10045 / NBRC 100440) (Methanococcus jannaschii) protein is F420-dependent methylenetetrahydromethanopterin dehydrogenase (mtd).